Here is a 274-residue protein sequence, read N- to C-terminus: 2,3,4,5-tetrahydropyridine-2,6-dicarboxylate N-succinyltransferase (274 aa).

Substrate is bound by residues Arg106 and Asp143.

This sequence belongs to the transferase hexapeptide repeat family. In terms of assembly, homotrimer.

It is found in the cytoplasm. It carries out the reaction (S)-2,3,4,5-tetrahydrodipicolinate + succinyl-CoA + H2O = (S)-2-succinylamino-6-oxoheptanedioate + CoA. Its pathway is amino-acid biosynthesis; L-lysine biosynthesis via DAP pathway; LL-2,6-diaminopimelate from (S)-tetrahydrodipicolinate (succinylase route): step 1/3. The chain is 2,3,4,5-tetrahydropyridine-2,6-dicarboxylate N-succinyltransferase from Rickettsia typhi (strain ATCC VR-144 / Wilmington).